The primary structure comprises 215 residues: Adenylate kinase (215 aa).

10-15 contacts ATP; it reads GAGKGT. Positions 30-59 are NMP; that stretch reads STGDMFRLAIKEGTELGKKAKEFMDQGDLV. Residues T31, R36, 57–59, 85–88, and Q92 each bind AMP; these read DLV and GFPR. The tract at residues 126–163 is LID; sequence GRRICPTCGTAYHVVYNPPKEEGICDKDGSQLIQRDDD. Residue R127 participates in ATP binding. 4 residues coordinate Zn(2+): C130, C133, C150, and D153. AMP is bound by residues R160 and R171. An ATP-binding site is contributed by R199.

This sequence belongs to the adenylate kinase family. In terms of assembly, monomer.

It localises to the cytoplasm. It catalyses the reaction AMP + ATP = 2 ADP. It functions in the pathway purine metabolism; AMP biosynthesis via salvage pathway; AMP from ADP: step 1/1. Functionally, catalyzes the reversible transfer of the terminal phosphate group between ATP and AMP. Plays an important role in cellular energy homeostasis and in adenine nucleotide metabolism. The sequence is that of Adenylate kinase from Oceanobacillus iheyensis (strain DSM 14371 / CIP 107618 / JCM 11309 / KCTC 3954 / HTE831).